A 216-amino-acid polypeptide reads, in one-letter code: Purine nucleoside phosphorylase DeoD-type (216 aa).

Residues Arg-4, Arg-23, and 67 to 70 (RVGT) contribute to the phosphate site. Residues 159 to 161 (EME) and 183 to 184 (SD) contribute to the a purine D-ribonucleoside site. The active-site Proton donor is the Asp-184.

The protein belongs to the PNP/UDP phosphorylase family. Homohexamer; trimer of homodimers.

The catalysed reaction is a purine D-ribonucleoside + phosphate = a purine nucleobase + alpha-D-ribose 1-phosphate. The enzyme catalyses a purine 2'-deoxy-D-ribonucleoside + phosphate = a purine nucleobase + 2-deoxy-alpha-D-ribose 1-phosphate. Its function is as follows. Catalyzes the reversible phosphorolytic breakdown of the N-glycosidic bond in the beta-(deoxy)ribonucleoside molecules, with the formation of the corresponding free purine bases and pentose-1-phosphate. This is Purine nucleoside phosphorylase DeoD-type from Streptococcus thermophilus.